Reading from the N-terminus, the 923-residue chain is RNA polymerase-associated protein RapA (923 aa).

One can recognise a Helicase ATP-binding domain in the interval 162–332; that stretch reads EVGNRVNPRV…FARLRLLDPE (171 aa). Residue 175–182 participates in ATP binding; that stretch reads DEVGLGKT. Positions 278–281 match the DEAH box motif; sequence DEAH. Residues 443–597 enclose the Helicase C-terminal domain; the sequence is KIDWLIDFLK…TCPMGMALFS (155 aa).

The protein belongs to the SNF2/RAD54 helicase family. RapA subfamily. As to quaternary structure, interacts with the RNAP. Has a higher affinity for the core RNAP than for the holoenzyme. Its ATPase activity is stimulated by binding to RNAP.

Its function is as follows. Transcription regulator that activates transcription by stimulating RNA polymerase (RNAP) recycling in case of stress conditions such as supercoiled DNA or high salt concentrations. Probably acts by releasing the RNAP, when it is trapped or immobilized on tightly supercoiled DNA. Does not activate transcription on linear DNA. Probably not involved in DNA repair. The chain is RNA polymerase-associated protein RapA from Haemophilus influenzae (strain PittEE).